A 196-amino-acid chain; its full sequence is ATP-dependent Clp protease proteolytic subunit (196 aa).

S98 acts as the Nucleophile in catalysis. Residue H123 is part of the active site.

It belongs to the peptidase S14 family. As to quaternary structure, fourteen ClpP subunits assemble into 2 heptameric rings which stack back to back to give a disk-like structure with a central cavity, resembling the structure of eukaryotic proteasomes.

It localises to the cytoplasm. It carries out the reaction Hydrolysis of proteins to small peptides in the presence of ATP and magnesium. alpha-casein is the usual test substrate. In the absence of ATP, only oligopeptides shorter than five residues are hydrolyzed (such as succinyl-Leu-Tyr-|-NHMec, and Leu-Tyr-Leu-|-Tyr-Trp, in which cleavage of the -Tyr-|-Leu- and -Tyr-|-Trp bonds also occurs).. Functionally, cleaves peptides in various proteins in a process that requires ATP hydrolysis. Has a chymotrypsin-like activity. Plays a major role in the degradation of misfolded proteins. The protein is ATP-dependent Clp protease proteolytic subunit of Limosilactobacillus fermentum (strain NBRC 3956 / LMG 18251) (Lactobacillus fermentum).